Consider the following 678-residue polypeptide: Glycine--tRNA ligase beta subunit (678 aa).

This sequence belongs to the class-II aminoacyl-tRNA synthetase family. In terms of assembly, tetramer of two alpha and two beta subunits.

It is found in the cytoplasm. It catalyses the reaction tRNA(Gly) + glycine + ATP = glycyl-tRNA(Gly) + AMP + diphosphate. In Streptococcus pneumoniae (strain P1031), this protein is Glycine--tRNA ligase beta subunit.